Here is a 217-residue protein sequence, read N- to C-terminus: IMPACT family member YvyE (217 aa).

Belongs to the IMPACT family.

This chain is IMPACT family member YvyE (yvyE), found in Bacillus subtilis (strain 168).